The chain runs to 798 residues: Protocadherin beta-13 (798 aa).

An N-terminal signal peptide occupies residues 1-28 (MEASGKLICRQRQVLFSFLLLGLSLAGA). At 29–690 (AEPRSYSVVE…AQADLLTVYL (662 aa)) the chain is on the extracellular side. Cadherin domains follow at residues 36-134 (VVEE…SPVF), 139-243 (MLVK…APEF), 248-348 (YRVQ…APEV), 353-451 (FTSP…APAF), and 456-561 (YTLF…SPFV). N-linked (GlcNAc...) asparagine glycans are attached at residues Asn418 and Asn436. Asn567 carries an N-linked (GlcNAc...) asparagine glycan. The 104-residue stretch at 568–671 (GSAPCTELVP…LVDGFSQPYL (104 aa)) folds into the Cadherin 6 domain. Residues 691 to 711 (VVALASVSSLFLFSVLLFVAV) traverse the membrane as a helical segment. Residues 712–798 (RLCRRSRAAS…FPNNFGFNIQ (87 aa)) lie on the Cytoplasmic side of the membrane.

It localises to the cell membrane. Functionally, potential calcium-dependent cell-adhesion protein. May be involved in the establishment and maintenance of specific neuronal connections in the brain. This is Protocadherin beta-13 (PCDHB13) from Homo sapiens (Human).